The primary structure comprises 394 residues: Phosphopentomutase (394 aa).

Mn(2+)-binding residues include Asp15, Asp288, His293, Asp329, His330, and His341.

The protein belongs to the phosphopentomutase family. Requires Mn(2+) as cofactor.

The protein localises to the cytoplasm. It catalyses the reaction 2-deoxy-alpha-D-ribose 1-phosphate = 2-deoxy-D-ribose 5-phosphate. It carries out the reaction alpha-D-ribose 1-phosphate = D-ribose 5-phosphate. It functions in the pathway carbohydrate degradation; 2-deoxy-D-ribose 1-phosphate degradation; D-glyceraldehyde 3-phosphate and acetaldehyde from 2-deoxy-alpha-D-ribose 1-phosphate: step 1/2. Functionally, isomerase that catalyzes the conversion of deoxy-ribose 1-phosphate (dRib-1-P) and ribose 1-phosphate (Rib-1-P) to deoxy-ribose 5-phosphate (dRib-5-P) and ribose 5-phosphate (Rib-5-P), respectively. The chain is Phosphopentomutase (drm) from Bacillus subtilis (strain 168).